A 129-amino-acid polypeptide reads, in one-letter code: ATP synthase epsilon chain (129 aa).

The protein belongs to the ATPase epsilon chain family. In terms of assembly, F-type ATPases have 2 components, CF(1) - the catalytic core - and CF(0) - the membrane proton channel. CF(1) has five subunits: alpha(3), beta(3), gamma(1), delta(1), epsilon(1). CF(0) has three main subunits: a, b and c.

The protein localises to the cell inner membrane. Its function is as follows. Produces ATP from ADP in the presence of a proton gradient across the membrane. The sequence is that of ATP synthase epsilon chain from Campylobacter curvus (strain 525.92).